A 501-amino-acid polypeptide reads, in one-letter code: ATP synthase subunit alpha (501 aa).

An ATP-binding site is contributed by G170–S177.

It belongs to the ATPase alpha/beta chains family. F-type ATPases have 2 components, CF(1) - the catalytic core - and CF(0) - the membrane proton channel. CF(1) has five subunits: alpha(3), beta(3), gamma(1), delta(1), epsilon(1). CF(0) has three main subunits: a(1), b(2) and c(9-12). The alpha and beta chains form an alternating ring which encloses part of the gamma chain. CF(1) is attached to CF(0) by a central stalk formed by the gamma and epsilon chains, while a peripheral stalk is formed by the delta and b chains.

It localises to the cell membrane. It catalyses the reaction ATP + H2O + 4 H(+)(in) = ADP + phosphate + 5 H(+)(out). Functionally, produces ATP from ADP in the presence of a proton gradient across the membrane. The alpha chain is a regulatory subunit. The polypeptide is ATP synthase subunit alpha (Acholeplasma laidlawii (strain PG-8A)).